Here is a 105-residue protein sequence, read N- to C-terminus: Nitrogen fixation nifHD region glnB-like protein 1 (105 aa).

It belongs to the P(II) protein family.

In terms of biological role, could be involved in the regulation of nitrogen fixation. In Methanococcus maripaludis (strain DSM 14266 / JCM 13030 / NBRC 101832 / S2 / LL), this protein is Nitrogen fixation nifHD region glnB-like protein 1 (glnBI).